A 561-amino-acid polypeptide reads, in one-letter code: Arf-GAP domain and FG repeat-containing protein 1 (561 aa).

Positions 11-135 (EKHLKMLRDM…WYVPPEQAKV (125 aa)) constitute an Arf-GAP domain. A C4-type zinc finger spans residues 29–52 (CFDCDQRGPTYVNMTVGSFVCTSC). The residue at position 167 (S167) is a Phosphoserine. Residues 171–193 (LHLNKGTPTQSPVVGRSQGQQQE) form a disordered region. Residues 176–191 (GTPTQSPVVGRSQGQQ) are compositionally biased toward polar residues. Position 177 is a phosphothreonine (T177). Phosphoserine is present on residues S181 and S362. S367 carries O-linked (GlcNAc) serine glycosylation. Positions 409-451 (PVGASPQTQPASSGPAPFGATPSTNPFVAATGPSAASSTNPFQ) are disordered. The span at 442–451 (SAASSTNPFQ) shows a compositional bias: polar residues.

In terms of assembly, interacts with EPS15R and EPS15. Interacts with FCHO1. O-glycosylated.

The protein resides in the nucleus. Its subcellular location is the cytoplasmic vesicle. Required for vesicle docking or fusion during acrosome biogenesis. May play a role in RNA trafficking or localization. In Rattus norvegicus (Rat), this protein is Arf-GAP domain and FG repeat-containing protein 1 (Agfg1).